We begin with the raw amino-acid sequence, 225 residues long: Ribosome maturation factor RimM (225 aa).

The 82-residue stretch at Ala144–Tyr225 folds into the PRC barrel domain.

It belongs to the RimM family. As to quaternary structure, binds ribosomal protein uS19.

The protein localises to the cytoplasm. Functionally, an accessory protein needed during the final step in the assembly of 30S ribosomal subunit, possibly for assembly of the head region. Essential for efficient processing of 16S rRNA. May be needed both before and after RbfA during the maturation of 16S rRNA. It has affinity for free ribosomal 30S subunits but not for 70S ribosomes. The polypeptide is Ribosome maturation factor RimM (Burkholderia lata (strain ATCC 17760 / DSM 23089 / LMG 22485 / NCIMB 9086 / R18194 / 383)).